The sequence spans 229 residues: DNA mismatch repair protein MutH (229 aa).

The protein belongs to the MutH family.

It localises to the cytoplasm. Its function is as follows. Sequence-specific endonuclease that cleaves unmethylated GATC sequences. It is involved in DNA mismatch repair. The polypeptide is DNA mismatch repair protein MutH (Shigella boydii serotype 18 (strain CDC 3083-94 / BS512)).